The sequence spans 469 residues: Glutamate--tRNA ligase (469 aa).

The 'HIGH' region motif lies at 11-21 (PSPTGFIHLGN). The 'KMSKS' region motif lies at 243–247 (KMSKR). Lysine 246 is a binding site for ATP.

It belongs to the class-I aminoacyl-tRNA synthetase family. Glutamate--tRNA ligase type 1 subfamily. As to quaternary structure, monomer.

It localises to the cytoplasm. The catalysed reaction is tRNA(Glu) + L-glutamate + ATP = L-glutamyl-tRNA(Glu) + AMP + diphosphate. Catalyzes the attachment of glutamate to tRNA(Glu) in a two-step reaction: glutamate is first activated by ATP to form Glu-AMP and then transferred to the acceptor end of tRNA(Glu). This chain is Glutamate--tRNA ligase, found in Burkholderia orbicola (strain AU 1054).